The primary structure comprises 322 residues: Sideroflexin-1 (322 aa).

Ser2 is modified (N-acetylserine). Residues 2 to 102 (SGELPPNINI…MSAQVPMNMT (101 aa)) lie on the Mitochondrial matrix side of the membrane. A helical membrane pass occupies residues 103–120 (ITGCMMTFYRTTPAVLFW). Residues 121 to 146 (QWINQSFNAVVNYTNRSGDAPLTVNE) are Mitochondrial intermembrane-facing. A helical membrane pass occupies residues 147–167 (LGTAYVSATTGAVATALGLNA). At 168–174 (LTKHVSP) the chain is on the mitochondrial matrix side. The helical transmembrane segment at 175-195 (LIGRFVPFAAVAAANCINIPL) threads the bilayer. Topologically, residues 196–228 (MRQRELKVGIPVTDENGNRLGESANAAKQAITQ) are mitochondrial intermembrane. A helical transmembrane segment spans residues 229–249 (VVVSRILMAAPGMAIPPFIMN). Residues 250–266 (TLEKKAFLKRFPWMSAP) lie on the Mitochondrial matrix side of the membrane. Residues 267 to 287 (IQVGLVGFCLVFATPLCCALF) form a helical membrane-spanning segment. At 288–322 (PQKSSMSVTSLEAELQAKIQESHPELRRVYFNKGL) the chain is on the mitochondrial intermembrane side.

It belongs to the sideroflexin family. As to expression, highly expressed in tissues with high one-carbon metabolism activity, such as blood, liver and kidney.

It localises to the mitochondrion inner membrane. The enzyme catalyses L-serine(in) = L-serine(out). The catalysed reaction is L-alanine(in) = L-alanine(out). It catalyses the reaction L-cysteine(in) = L-cysteine(out). Its function is as follows. Amino acid transporter importing serine, an essential substrate of the mitochondrial branch of the one-carbon pathway, into mitochondria. Mitochondrial serine is then converted to glycine and formate, which exits to the cytosol where it is used to generate the charged folates that serve as one-carbon donors. May also transport other amino acids including alanine and cysteine. The polypeptide is Sideroflexin-1 (Homo sapiens (Human)).